The chain runs to 186 residues: Peptidyl-tRNA hydrolase (186 aa).

Tyrosine 14 lines the tRNA pocket. The Proton acceptor role is filled by histidine 19. Phenylalanine 64, asparagine 66, and asparagine 112 together coordinate tRNA.

Belongs to the PTH family. Monomer.

It localises to the cytoplasm. It catalyses the reaction an N-acyl-L-alpha-aminoacyl-tRNA + H2O = an N-acyl-L-amino acid + a tRNA + H(+). Hydrolyzes ribosome-free peptidyl-tRNAs (with 1 or more amino acids incorporated), which drop off the ribosome during protein synthesis, or as a result of ribosome stalling. In terms of biological role, catalyzes the release of premature peptidyl moieties from peptidyl-tRNA molecules trapped in stalled 50S ribosomal subunits, and thus maintains levels of free tRNAs and 50S ribosomes. This is Peptidyl-tRNA hydrolase from Mycoplasma mycoides subsp. mycoides SC (strain CCUG 32753 / NCTC 10114 / PG1).